The following is a 410-amino-acid chain: Dipeptidase 1 (410 aa).

Positions 1-16 are cleaved as a signal peptide; sequence MWTGWWLWPLVAVCTA. Zn(2+) is bound by residues His36 and Asp38. N-linked (GlcNAc...) asparagine glycans are attached at residues Asn57 and Asn62. A disulfide bridge links Cys87 with Cys170. A Zn(2+)-binding site is contributed by Glu141. His168 serves as a coordination point for substrate. Residues His214 and His235 each coordinate Zn(2+). A disulfide bond links Cys242 and Cys274. Substrate is bound at residue Arg246. The N-linked (GlcNAc...) asparagine glycan is linked to Asn279. Asp304 contacts substrate. Ser384 carries GPI-anchor amidated serine lipidation. The propeptide at 385–410 is removed in mature form; that stretch reads GAPSLHLQPGTLLASLVTLLLSLCLL.

Belongs to the metallo-dependent hydrolases superfamily. Peptidase M19 family. As to quaternary structure, homodimer; disulfide-linked. Zn(2+) is required as a cofactor.

It localises to the apical cell membrane. The enzyme catalyses an L-aminoacyl-L-amino acid + H2O = 2 an L-alpha-amino acid. It catalyses the reaction leukotriene D4 + H2O = leukotriene E4 + glycine. The catalysed reaction is L-cystine-bis-glycine + 2 H2O = L-cystine + 2 glycine. It carries out the reaction a beta-lactam + H2O = a substituted beta-amino acid. The enzyme catalyses glycyldehydrophenylalanine + H2O = 2,3-didehydrophenylalanine + glycine. With respect to regulation, inhibited by L-penicillamine. Inhibited by cilastatin. Hydrolyzes a wide range of dipeptides including the conversion of leukotriene D4 to leukotriene E4. Hydrolyzes cystinyl-bis-glycine (cys-bis-gly) formed during glutathione degradation. Also possesses beta lactamase activity and hydrolytically inactivates beta-lactam antibiotics. In terms of biological role, independently of its dipeptidase activity, acts as an adhesion receptor for neutrophil recruitment from bloodstream into inflamed lungs and liver. The chain is Dipeptidase 1 (DPEP1) from Bos taurus (Bovine).